The primary structure comprises 284 residues: 3-methyl-2-oxobutanoate hydroxymethyltransferase 2 (284 aa).

Positions 49 and 88 each coordinate Mg(2+). Residues 49 to 50 (DS), D88, and K118 each bind 3-methyl-2-oxobutanoate. E120 is a Mg(2+) binding site. The active-site Proton acceptor is the E187.

This sequence belongs to the PanB family. As to quaternary structure, homodecamer; pentamer of dimers. Requires Mg(2+) as cofactor.

Its subcellular location is the cytoplasm. The catalysed reaction is 3-methyl-2-oxobutanoate + (6R)-5,10-methylene-5,6,7,8-tetrahydrofolate + H2O = 2-dehydropantoate + (6S)-5,6,7,8-tetrahydrofolate. The protein operates within cofactor biosynthesis; (R)-pantothenate biosynthesis; (R)-pantoate from 3-methyl-2-oxobutanoate: step 1/2. Catalyzes the reversible reaction in which hydroxymethyl group from 5,10-methylenetetrahydrofolate is transferred onto alpha-ketoisovalerate to form ketopantoate. This chain is 3-methyl-2-oxobutanoate hydroxymethyltransferase 2, found in Burkholderia ambifaria (strain ATCC BAA-244 / DSM 16087 / CCUG 44356 / LMG 19182 / AMMD) (Burkholderia cepacia (strain AMMD)).